The sequence spans 360 residues: S-adenosylmethionine:tRNA ribosyltransferase-isomerase (360 aa).

The protein belongs to the QueA family. Monomer.

The protein resides in the cytoplasm. The catalysed reaction is 7-aminomethyl-7-carbaguanosine(34) in tRNA + S-adenosyl-L-methionine = epoxyqueuosine(34) in tRNA + adenine + L-methionine + 2 H(+). It functions in the pathway tRNA modification; tRNA-queuosine biosynthesis. Functionally, transfers and isomerizes the ribose moiety from AdoMet to the 7-aminomethyl group of 7-deazaguanine (preQ1-tRNA) to give epoxyqueuosine (oQ-tRNA). This Rhizobium meliloti (strain 1021) (Ensifer meliloti) protein is S-adenosylmethionine:tRNA ribosyltransferase-isomerase.